The sequence spans 1663 residues: Cortactin-binding protein 2 (1663 aa).

Disordered stretches follow at residues 1–23 (MATD…AGAA), 203–222 (KKKT…RSTE), 367–440 (GASV…LHPG), 454–478 (GNAN…SPTS), and 498–614 (RFTS…LPPK). The stretch at 119–276 (KKMQERMSAQ…EQLKKGSDSK (158 aa)) forms a coiled coil. Residues 386–396 (PSTGSTSDPTS) are compositionally biased toward low complexity. An Asymmetric dimethylarginine modification is found at R498. The span at 583–593 (TVASTPSSLPQ) shows a compositional bias: polar residues. ANK repeat units lie at residues 709–739 (GRPT…DINY), 743–772 (DGHS…QVNA), 776–805 (NGFT…NINH), 809–838 (GGQT…NRSV), 842–871 (DGWT…PAHG), and 912–942 (EGWT…EPER). A disordered region spans residues 1448 to 1483 (KKGESGAWRKVNTSPRRKSGRFSLPTWNKPDLSTEG). Residue S1524 is modified to Phosphoserine. Residues 1560–1663 (DSSGNNPVLS…KNGHLEKPNK (104 aa)) form a disordered region. Polar residues-rich tracts occupy residues 1561–1574 (SSGN…TINN) and 1582–1599 (KEVS…SNSK). Over residues 1624-1638 (SQNTKRSSSSSNTRQ) the composition is skewed to low complexity. Residues 1645-1663 (SKEENWNLHKNGHLEKPNK) show a composition bias toward basic and acidic residues.

As to quaternary structure, interacts with CTTN/cortactin SH3 domain. Interacts with STRN, STRN4/zinedin and MOB4/phocein; this interactions mediate the association with the STRIPAK core complex and may regulate dendritic spine distribution of the STRIPAK complex in hippocampal neurons. Activation of glutamate receptors weakens the interaction with STRN and STRN4.

It is found in the cytoplasm. The protein resides in the cell cortex. The protein localises to the cell projection. It localises to the dendritic spine. Its function is as follows. Regulates the dendritic spine distribution of CTTN/cortactin in hippocampal neurons, and thus controls dendritic spinogenesis and dendritic spine maintenance. Associates with the striatin-interacting phosphatase and kinase (STRIPAK) core complex to regulate dendritic spine distribution of the STRIPAK complex in hippocampal neurons. The polypeptide is Cortactin-binding protein 2 (CTTNBP2) (Gorilla gorilla gorilla (Western lowland gorilla)).